Reading from the N-terminus, the 342-residue chain is UDP-N-acetylglucosamine--N-acetylmuramyl-(pentapeptide) pyrophosphoryl-undecaprenol N-acetylglucosamine transferase (342 aa).

UDP-N-acetyl-alpha-D-glucosamine is bound by residues 10–12 (TGG), Asn-124, Ser-177, and Gln-275.

It belongs to the glycosyltransferase 28 family. MurG subfamily.

It localises to the cell inner membrane. It carries out the reaction di-trans,octa-cis-undecaprenyl diphospho-N-acetyl-alpha-D-muramoyl-L-alanyl-D-glutamyl-meso-2,6-diaminopimeloyl-D-alanyl-D-alanine + UDP-N-acetyl-alpha-D-glucosamine = di-trans,octa-cis-undecaprenyl diphospho-[N-acetyl-alpha-D-glucosaminyl-(1-&gt;4)]-N-acetyl-alpha-D-muramoyl-L-alanyl-D-glutamyl-meso-2,6-diaminopimeloyl-D-alanyl-D-alanine + UDP + H(+). The protein operates within cell wall biogenesis; peptidoglycan biosynthesis. Its function is as follows. Cell wall formation. Catalyzes the transfer of a GlcNAc subunit on undecaprenyl-pyrophosphoryl-MurNAc-pentapeptide (lipid intermediate I) to form undecaprenyl-pyrophosphoryl-MurNAc-(pentapeptide)GlcNAc (lipid intermediate II). The polypeptide is UDP-N-acetylglucosamine--N-acetylmuramyl-(pentapeptide) pyrophosphoryl-undecaprenol N-acetylglucosamine transferase (Campylobacter jejuni subsp. jejuni serotype O:6 (strain 81116 / NCTC 11828)).